We begin with the raw amino-acid sequence, 309 residues long: Taste receptor type 2 member 20 (309 aa).

Topologically, residues 1–6 (MMSFLH) are extracellular. The helical transmembrane segment at 7–27 (IVFSILVVVAFILGNFANGFI) threads the bilayer. The Cytoplasmic portion of the chain corresponds to 28–46 (ALINFIAWVKRQKISSADQ). A helical transmembrane segment spans residues 47 to 67 (IIAALAVSRVGLLWVILLHWY). Over 68-79 (STVLNPTSSNLK) the chain is Extracellular. The helical transmembrane segment at 80 to 100 (VIIFISNAWAVTNHFSIWLAT) threads the bilayer. At 101–125 (SLSIFYLLKIVNFSRLIFHHLKRKA) the chain is on the cytoplasmic side. A helical transmembrane segment spans residues 126 to 146 (KSVVLVIVLGSLFFLVCHLVM). The Extracellular portion of the chain corresponds to 147-178 (KHTYINVWTEECEGNVTWKIKLRNAMHLSNLT). 2 N-linked (GlcNAc...) asparagine glycosylation sites follow: asparagine 161 and asparagine 176. A helical membrane pass occupies residues 179–199 (VAMLANLIPFTLTLISFLLLI). Over 200 to 229 (YSLCKHLKKMQLHGKGSQDPSTKIHIKALQ) the chain is Cytoplasmic. A helical membrane pass occupies residues 230-250 (TVTSFLILLAIYFLCLIISFW). The Extracellular segment spans residues 251-259 (NFKMRPKEI). The chain crosses the membrane as a helical span at residues 260 to 280 (VLMLCQAFGIIYPSFHSFILI). Over 281-309 (WGNKTLKQTFLSVLWQVTCWAKGQNQSTP) the chain is Cytoplasmic.

Belongs to the G-protein coupled receptor T2R family. Expressed in subsets of taste receptor cells of the tongue and exclusively in gustducin-positive cells.

It is found in the membrane. Its function is as follows. Receptor that may play a role in the perception of bitterness and is gustducin-linked. May play a role in sensing the chemical composition of the gastrointestinal content. The activity of this receptor may stimulate alpha gustducin, mediate PLC-beta-2 activation and lead to the gating of TRPM5. This is Taste receptor type 2 member 20 (TAS2R20) from Homo sapiens (Human).